The following is a 55-amino-acid chain: Large ribosomal subunit protein bL33 (55 aa).

This sequence belongs to the bacterial ribosomal protein bL33 family.

The polypeptide is Large ribosomal subunit protein bL33 (Granulibacter bethesdensis (strain ATCC BAA-1260 / CGDNIH1)).